We begin with the raw amino-acid sequence, 482 residues long: Vanillin dehydrogenase (482 aa).

An NAD(+)-binding site is contributed by 228-233; sequence GSTHVG. Active-site residues include E250 and C284.

Belongs to the aldehyde dehydrogenase family.

The enzyme catalyses vanillin + NAD(+) + H2O = vanillate + NADH + 2 H(+). Its function is as follows. Catalyzes the NAD-dependent oxidation of vanillin to vanillic acid. This is Vanillin dehydrogenase (vdh) from Pseudomonas fluorescens.